The following is a 160-amino-acid chain: MSVTKKPDLTDPVLKEKLAKGMGHNYYGEPAWPNDLLYIFPVVILGTFACVIGLSVLDPAAIGEPANPFATPLEILPEWYFYPVFQLLRTVPNKLLGVLLMAAVPAGLITVPFIENINKFQNPYRRPIATTLFLVGTLVAVWLGIGATLPIEISLTFGLF.

The next 3 membrane-spanning stretches (helical) occupy residues L36 to V56, L95 to E115, and T131 to I151.

This sequence belongs to the cytochrome b family. PetD subfamily. The 4 large subunits of the cytochrome b6-f complex are cytochrome b6, subunit IV (17 kDa polypeptide, petD), cytochrome f and the Rieske protein, while the 4 small subunits are petG, petL, petM and petN. The complex functions as a dimer.

The protein localises to the plastid. It is found in the chloroplast thylakoid membrane. Its function is as follows. Component of the cytochrome b6-f complex, which mediates electron transfer between photosystem II (PSII) and photosystem I (PSI), cyclic electron flow around PSI, and state transitions. In Tetradesmus obliquus (Green alga), this protein is Cytochrome b6-f complex subunit 4.